A 286-amino-acid polypeptide reads, in one-letter code: B3 domain-containing protein REM11 (286 aa).

A DNA-binding region (TF-B3 1) is located at residues 1-70 (MAWNLAIITL…TPMLSLVSTQ (70 aa)). The tract at residues 68–114 (STQSTSHKSQKRECSKHSEKESISAVPSKGKKNRKARSNREERRDSS) is disordered. Basic and acidic residues predominate over residues 78 to 89 (KRECSKHSEKES). Positions 119 to 219 (NRFVTFTPED…RAQVCFYGVF (101 aa)) form a DNA-binding region, TF-B3 2.

It is found in the nucleus. This chain is B3 domain-containing protein REM11 (REM11), found in Arabidopsis thaliana (Mouse-ear cress).